Here is a 309-residue protein sequence, read N- to C-terminus: Dicarboxylate carrier SLC25A8 (309 aa).

Residues 1-16 (MVGFKATDVPPTATVK) are Mitochondrial intermembrane-facing. Solcar repeat units follow at residues 11-106 (PTAT…VKQF), 114-203 (ASIG…IKDA), and 212-297 (DDLP…LKRA). An important for interaction with long-chain fatty acids region spans residues 16 to 63 (KFLGAGTAACIADLITFPLDTAKVRLQIQGESQGPVRATASAQYRGVM). The helical transmembrane segment at 17–40 (FLGAGTAACIADLITFPLDTAKVR) threads the bilayer. The Mitochondrial matrix segment spans residues 41-77 (LQIQGESQGPVRATASAQYRGVMGTILTMVRTEGPRS). The chain crosses the membrane as a helical span at residues 78-103 (LYNGLVAGLQRQMSFASVRIGLYDSV). The Mitochondrial intermembrane segment spans residues 104-119 (KQFYTKGSEHASIGSR). Residues 120–145 (LLAGSTTGALAVAVAQPTDVVKVRFQ) form a helical membrane-spanning segment. The Mitochondrial matrix segment spans residues 146 to 173 (AQARAGGGRRYQSTVNAYKTIAREEGFR). A helical membrane pass occupies residues 174-199 (GLWKGTSPNVARNAIVNCAELVTYDL). Residues 200-217 (IKDALLKANLMTDDLPCH) are Mitochondrial intermembrane-facing. A helical membrane pass occupies residues 218-242 (FTSAFGAGFCTTVIASPVDVVKTRY). Over 243–268 (MNSALGQYSSAGHCALTMLQKEGPRA) the chain is Mitochondrial matrix. Residues 269–294 (FYKGFMPSFLRLGSWNVVMFVTYEQL) traverse the membrane as a helical segment. Positions 278 to 285 (LRLGSWNV) are important for interaction with long-chain fatty acids. Residues 295 to 309 (KRALMAACTSREAPF) are Mitochondrial intermembrane-facing.

The protein belongs to the mitochondrial carrier (TC 2.A.29) family. In terms of assembly, homotetramer. Adopts an asymmetrical dimer of dimers functional form. Widely expressed in adult human tissues, including tissues rich in macrophages. Most expressed in white adipose tissue and skeletal muscle.

Its subcellular location is the mitochondrion inner membrane. The enzyme catalyses L-aspartate(out) + phosphate(in) + H(+)(in) = L-aspartate(in) + phosphate(out) + H(+)(out). It catalyses the reaction oxaloacetate(out) + phosphate(in) + H(+)(in) = oxaloacetate(in) + phosphate(out) + H(+)(out). It carries out the reaction (S)-malate(out) + phosphate(in) + H(+)(in) = (S)-malate(in) + phosphate(out) + H(+)(out). The catalysed reaction is malonate(out) + phosphate(in) + H(+)(in) = malonate(in) + phosphate(out) + H(+)(out). The enzyme catalyses sulfate(out) + phosphate(in) + H(+)(in) = sulfate(in) + phosphate(out) + H(+)(out). It catalyses the reaction (S)-malate(out) = (S)-malate(in). It carries out the reaction L-aspartate(out) = L-aspartate(in). The catalysed reaction is phosphate(in) = phosphate(out). The enzyme catalyses chloride(in) = chloride(out). It catalyses the reaction H(+)(in) = H(+)(out). It carries out the reaction a long-chain fatty acid(out) = a long-chain fatty acid(in). Its activity is regulated as follows. Inhibited by pyridoxal- 5'-phosphate, bathophenanthroline, tannic acid, bromocresol purple, butylmalonate and phenylsuccinate. Proton conductance is activated by cardiolipin and long-chain free fatty acids and inhibited by purine nucleotides ATP and ADP. Chloride ion transporter activity is inhibited by long-chain free fatty acids. In terms of biological role, antiporter that exports dicarboxylate intermediates of the Krebs cycle in exchange for phosphate plus a proton across the inner membrane of mitochondria, a process driven by mitochondrial motive force with an overall impact on glycolysis, glutaminolysis and glutathione-dependent redox balance. Continuous export of oxaloacetate and related four-carbon dicarboxylates from mitochondrial matrix into the cytosol negatively regulates the oxidation of acetyl-CoA substrates via the Krebs cycle, lowering the ATP/ADP ratio and reactive oxygen species (ROS) production. May mediate inducible proton entry into the mitochondrial matrix affecting ATP turnover as a protection mechanism against oxidative stress. The proton currents are most likely associated with fatty acid flipping across the inner membrane of mitochondria in a metabolic process regulated by free fatty acids and purine nucleotides. Regulates the use of glucose as a source of energy. Required for glucose-induced DRP1-dependent mitochondrial fission and neuron activation in the ventromedial nucleus of the hypothalamus (VMH). This mitochondrial adaptation mechanism modulates the VMH pool of glucose-excited neurons with an impact on systemic glucose homeostasis. Regulates ROS levels and metabolic reprogramming of macrophages during the resolution phase of inflammation. Attenuates ROS production in response to IL33 to preserve the integrity of the Krebs cycle required for persistent production of itaconate and subsequent GATA3-dependent differentiation of inflammation-resolving alternatively activated macrophages. Can unidirectionally transport anions including L-malate, L-aspartate, phosphate and chloride ions. Does not mediate adaptive thermogenesis. This chain is Dicarboxylate carrier SLC25A8 (UCP2), found in Homo sapiens (Human).